The sequence spans 341 residues: Tetraacyldisaccharide 4'-kinase (341 aa).

Residue 54–61 (TVGGAGKT) coordinates ATP.

It belongs to the LpxK family.

The catalysed reaction is a lipid A disaccharide + ATP = a lipid IVA + ADP + H(+). Its pathway is glycolipid biosynthesis; lipid IV(A) biosynthesis; lipid IV(A) from (3R)-3-hydroxytetradecanoyl-[acyl-carrier-protein] and UDP-N-acetyl-alpha-D-glucosamine: step 6/6. In terms of biological role, transfers the gamma-phosphate of ATP to the 4'-position of a tetraacyldisaccharide 1-phosphate intermediate (termed DS-1-P) to form tetraacyldisaccharide 1,4'-bis-phosphate (lipid IVA). In Brucella melitensis biotype 2 (strain ATCC 23457), this protein is Tetraacyldisaccharide 4'-kinase.